A 91-amino-acid chain; its full sequence is Small ribosomal subunit protein bS20 (91 aa).

This sequence belongs to the bacterial ribosomal protein bS20 family.

Its function is as follows. Binds directly to 16S ribosomal RNA. This chain is Small ribosomal subunit protein bS20, found in Thermosipho melanesiensis (strain DSM 12029 / CIP 104789 / BI429).